The sequence spans 320 residues: MENRKTFSWLKEQMIRSISVSIMIYVITRTSISNAYPIFAQQGYENPREATGRIVCANCHLANKPVDIEVPQAVLPDTVFEAVLRIPYDMQLKQVLANGKKGGLNVGAVLILPEGFELAPPDRISPELKEKIGNLSFQSYRPNKKNILVIGPVPGKKYSEIVFPILSPDPATKKDVHFLKYPIYVGGNRGRGQIYPDGSKSNNTVYNATSTGIVKKILRKEKGGYEISIVDASDGRQVIDIIPPGPELLFSEGESIKLDQPLTSNPNVGGFGQGDAEIVLQDPLRVQGLLFFFASVILAQVFLVLKKKQFEKVQLYEMNF.

An N-terminal signal peptide occupies residues 1-35 (MENRKTFSWLKEQMIRSISVSIMIYVITRTSISNA). Residues Y36, C56, C59, and H60 each coordinate heme. A helical transmembrane segment spans residues 286 to 305 (VQGLLFFFASVILAQVFLVL).

Belongs to the cytochrome f family. The 4 large subunits of the cytochrome b6-f complex are cytochrome b6, subunit IV (17 kDa polypeptide, petD), cytochrome f and the Rieske protein, while the 4 small subunits are PetG, PetL, PetM and PetN. The complex functions as a dimer. The cofactor is heme.

Its subcellular location is the plastid. It is found in the chloroplast thylakoid membrane. In terms of biological role, component of the cytochrome b6-f complex, which mediates electron transfer between photosystem II (PSII) and photosystem I (PSI), cyclic electron flow around PSI, and state transitions. The polypeptide is Cytochrome f (petA) (Zea mays (Maize)).